The primary structure comprises 318 residues: Mevalonate 3-kinase (318 aa).

A substrate-binding site is contributed by leucine 19. ATP is bound by residues 96 to 100 and 105 to 108; these read YSSQN and SGSS. Substrate is bound by residues glutamate 140 and arginine 144. ATP-binding residues include arginine 185 and serine 188.

It belongs to the GHMP kinase family. In terms of assembly, homodimer.

The enzyme catalyses (R)-mevalonate + ATP = (R)-3-phosphomevalonate + ADP + H(+). The protein operates within isoprenoid biosynthesis; isopentenyl diphosphate biosynthesis via mevalonate pathway. In terms of biological role, catalyzes the phosphorylation of mevalonate (MVA) to yield mevalonate-3-phosphate. Functions in an alternative mevalonate pathway, only present in extreme acidophiles of the Thermoplasmatales order, which passes through mevalonate 3-phosphate rather than mevalonate 5-phosphate. The polypeptide is Mevalonate 3-kinase (Thermoplasma acidophilum (strain ATCC 25905 / DSM 1728 / JCM 9062 / NBRC 15155 / AMRC-C165)).